The following is a 238-amino-acid chain: ATP synthase subunit a (238 aa).

5 helical membrane passes run 16–36 (LIWLSMPLWLLSSMVPMTVLF), 79–99 (GLFMMILMLNLSGNFPFFFPV), 103–123 (FVFGFSFALSIWTCLVLSSLL), 129–149 (GLMSLVPTGCPLILVPFMVVV), and 209–229 (VFGAAEVAIACIQCYIFCVLL).

It belongs to the ATPase A chain family. As to quaternary structure, F-type ATPases have 2 components, CF(1) - the catalytic core - and CF(0) - the membrane proton channel. CF(1) has five subunits: alpha(3), beta(3), gamma(1), delta(1), epsilon(1). CF(0) has three main subunits: a, b and c.

The protein localises to the mitochondrion inner membrane. Mitochondrial membrane ATP synthase (F(1)F(0) ATP synthase or Complex V) produces ATP from ADP in the presence of a proton gradient across the membrane which is generated by electron transport complexes of the respiratory chain. F-type ATPases consist of two structural domains, F(1) - containing the extramembraneous catalytic core and F(0) - containing the membrane proton channel, linked together by a central stalk and a peripheral stalk. During catalysis, ATP synthesis in the catalytic domain of F(1) is coupled via a rotary mechanism of the central stalk subunits to proton translocation. Key component of the proton channel; it may play a direct role in the translocation of protons across the membrane. This chain is ATP synthase subunit a (ATP6), found in Mytilus edulis (Blue mussel).